Reading from the N-terminus, the 512-residue chain is Methionine--tRNA ligase (512 aa).

Positions 11–21 (YYASGKPHIGH) match the 'HIGH' region motif. Residues Cys-126, Cys-129, Cys-143, and His-147 each contribute to the Zn(2+) site. The 'KMSKS' region motif lies at 301–305 (KMSKS). ATP is bound at residue Lys-304.

This sequence belongs to the class-I aminoacyl-tRNA synthetase family. MetG type 2A subfamily. As to quaternary structure, monomer. The cofactor is Zn(2+).

It is found in the cytoplasm. It catalyses the reaction tRNA(Met) + L-methionine + ATP = L-methionyl-tRNA(Met) + AMP + diphosphate. In terms of biological role, is required not only for elongation of protein synthesis but also for the initiation of all mRNA translation through initiator tRNA(fMet) aminoacylation. This Mycoplasma pneumoniae (strain ATCC 29342 / M129 / Subtype 1) (Mycoplasmoides pneumoniae) protein is Methionine--tRNA ligase (metG).